We begin with the raw amino-acid sequence, 205 residues long: Adenylyl-sulfate kinase (205 aa).

31–38 (GLSGAGKS) is a binding site for ATP. The active-site Phosphoserine intermediate is Ser-105.

Belongs to the APS kinase family.

The enzyme catalyses adenosine 5'-phosphosulfate + ATP = 3'-phosphoadenylyl sulfate + ADP + H(+). The protein operates within sulfur metabolism; hydrogen sulfide biosynthesis; sulfite from sulfate: step 2/3. Functionally, catalyzes the synthesis of activated sulfate. The sequence is that of Adenylyl-sulfate kinase from Shewanella sp. (strain ANA-3).